A 161-amino-acid polypeptide reads, in one-letter code: Tropomyosin-2 (161 aa).

A coiled-coil region spans residues 1–161; the sequence is MEKIKEKLNS…DEIANSLENL (161 aa). A compositionally biased stretch (basic and acidic residues) spans 32–43; the sequence is LEQSNTEKENEI. The tract at residues 32–97 is disordered; it reads LEQSNTEKEN…NQDLEQQLED (66 aa). Ser-55 is modified (phosphoserine). A compositionally biased stretch (polar residues) spans 62 to 83; the sequence is SQLSDTKQLAEDSNNLRSNNEN. A phosphoserine mark is found at Ser-116 and Ser-157.

In terms of assembly, homodimer.

The protein localises to the cytoplasm. It localises to the cytoskeleton. Its function is as follows. Involved in cell morphogenesis. Binds to F-actin and stabilizes the actin filaments. This Saccharomyces cerevisiae (strain ATCC 204508 / S288c) (Baker's yeast) protein is Tropomyosin-2 (TPM2).